Here is a 266-residue protein sequence, read N- to C-terminus: Glucosamine-6-phosphate deaminase (266 aa).

Aspartate 72 acts as the Proton acceptor; for enolization step in catalysis. The active-site For ring-opening step is aspartate 141. Histidine 143 (proton acceptor; for ring-opening step) is an active-site residue. Glutamate 148 serves as the catalytic For ring-opening step.

It belongs to the glucosamine/galactosamine-6-phosphate isomerase family. NagB subfamily. As to quaternary structure, homohexamer.

It carries out the reaction alpha-D-glucosamine 6-phosphate + H2O = beta-D-fructose 6-phosphate + NH4(+). Its pathway is amino-sugar metabolism; N-acetylneuraminate degradation; D-fructose 6-phosphate from N-acetylneuraminate: step 5/5. With respect to regulation, allosterically activated by N-acetylglucosamine 6-phosphate (GlcNAc6P). In terms of biological role, catalyzes the reversible isomerization-deamination of glucosamine 6-phosphate (GlcN6P) to form fructose 6-phosphate (Fru6P) and ammonium ion. In Vibrio vulnificus (strain CMCP6), this protein is Glucosamine-6-phosphate deaminase.